Here is a 644-residue protein sequence, read N- to C-terminus: Exoribonuclease 2 (644 aa).

Residues 189-516 enclose the RNB domain; that stretch reads RQDLTALNFV…NHRLLKAVIK (328 aa). One can recognise an S1 motif domain in the interval 561–643; sequence NTRFAAEIID…ETRSIIARPA (83 aa).

Belongs to the RNR ribonuclease family. RNase II subfamily.

It localises to the cytoplasm. The enzyme catalyses Exonucleolytic cleavage in the 3'- to 5'-direction to yield nucleoside 5'-phosphates.. Functionally, involved in mRNA degradation. Hydrolyzes single-stranded polyribonucleotides processively in the 3' to 5' direction. The polypeptide is Exoribonuclease 2 (Salmonella agona (strain SL483)).